A 362-amino-acid polypeptide reads, in one-letter code: 3-dehydroquinate synthase (362 aa).

Residues 72–77, 106–110, 130–131, Lys-143, Lys-152, and 170–173 each bind NAD(+); these read DGEQYK, GVVGD, TT, and CLKT. Zn(2+)-binding residues include Glu-185, His-248, and His-265.

This sequence belongs to the sugar phosphate cyclases superfamily. Dehydroquinate synthase family. Requires Co(2+) as cofactor. Zn(2+) serves as cofactor. It depends on NAD(+) as a cofactor.

The protein resides in the cytoplasm. The catalysed reaction is 7-phospho-2-dehydro-3-deoxy-D-arabino-heptonate = 3-dehydroquinate + phosphate. Its pathway is metabolic intermediate biosynthesis; chorismate biosynthesis; chorismate from D-erythrose 4-phosphate and phosphoenolpyruvate: step 2/7. Catalyzes the conversion of 3-deoxy-D-arabino-heptulosonate 7-phosphate (DAHP) to dehydroquinate (DHQ). This is 3-dehydroquinate synthase from Aliivibrio salmonicida (strain LFI1238) (Vibrio salmonicida (strain LFI1238)).